Reading from the N-terminus, the 188-residue chain is SRP-independent targeting protein 3 (188 aa).

A helical transmembrane segment spans residues 27-47 (TIIMYIRILYCSSIGISWIIY). S157 bears the Phosphoserine mark. The segment at 157–188 (SLFGGMGQTGPKTDKKSIEEAERAGNAGVKAE) is disordered. The segment covering 168 to 179 (KTDKKSIEEAER) has biased composition (basic and acidic residues).

The protein belongs to the PHO88 family. Interacts with ENV10/SND2. ENV10/SND2 and PHO88/SND3 form a complex with the translocon in the endoplasmic reticulum membrane.

The protein resides in the endoplasmic reticulum membrane. Its subcellular location is the mitochondrion. Functionally, functions in the SND pathway, a SRP (signal recognition particle) and GET (guided entry of tail-anchored proteins) independent pathway for targeting a broad range of substrate proteins to the endoplasmic reticulum. SND functions in parallel to GET in targeting proteins with downstream hydrophobic motifs. Involved in inorganic phosphate uptake. Also involved in telomere length regulation and maintenance. This Saccharomyces cerevisiae (strain ATCC 204508 / S288c) (Baker's yeast) protein is SRP-independent targeting protein 3.